The following is a 312-amino-acid chain: Methionyl-tRNA formyltransferase (312 aa).

110-113 serves as a coordination point for (6S)-5,6,7,8-tetrahydrofolate; sequence SLLP.

It belongs to the Fmt family.

The catalysed reaction is L-methionyl-tRNA(fMet) + (6R)-10-formyltetrahydrofolate = N-formyl-L-methionyl-tRNA(fMet) + (6S)-5,6,7,8-tetrahydrofolate + H(+). Its function is as follows. Attaches a formyl group to the free amino group of methionyl-tRNA(fMet). The formyl group appears to play a dual role in the initiator identity of N-formylmethionyl-tRNA by promoting its recognition by IF2 and preventing the misappropriation of this tRNA by the elongation apparatus. The polypeptide is Methionyl-tRNA formyltransferase (Mycobacterium marinum (strain ATCC BAA-535 / M)).